We begin with the raw amino-acid sequence, 261 residues long: Homeobox protein engrailed-2b (261 aa).

Composition is skewed to basic and acidic residues over residues methionine 1 to asparagine 21, glycine 53 to arginine 72, and lysine 100 to threonine 116. 3 disordered regions span residues methionine 1–isoleucine 24, glycine 53–serine 125, and aspartate 152–arginine 176. Positions aspartate 172 to threonine 231 form a DNA-binding region, homeobox.

The protein belongs to the engrailed homeobox family.

Its subcellular location is the nucleus. The polypeptide is Homeobox protein engrailed-2b (eng2b) (Danio rerio (Zebrafish)).